The chain runs to 182 residues: MMRKINEIFYSLQGEGYHTGTPAVFIRFSGCNLKCSFCDTQHEAGTLMTDDEIIAEVSKYPAVTVILTGGEPSLWIDDALIDRLHEAGKYVCIETNGTRPLPESIDWVTCSPKQGVKLGITRMDEVKVVYEGQDISIYELLPAEHFFLQPCSCNNTALTVDCVMRHPKWRLSLQTHKLIDIR.

Residues 12–14 and R27 contribute to the substrate site; that span reads LQG. The region spanning 18-182 is the Radical SAM core domain; sequence HTGTPAVFIR…LQTHKLIDIR (165 aa). [4Fe-4S] cluster-binding residues include C31, C35, and C38. T40 contacts Mg(2+). T68 is a substrate binding site. Residues G70 and 111–113 contribute to the S-adenosyl-L-methionine site; that span reads SPK.

It belongs to the radical SAM superfamily. 7-carboxy-7-deazaguanine synthase family. As to quaternary structure, homodimer. Requires [4Fe-4S] cluster as cofactor. S-adenosyl-L-methionine serves as cofactor. It depends on Mg(2+) as a cofactor.

The catalysed reaction is 6-carboxy-5,6,7,8-tetrahydropterin + H(+) = 7-carboxy-7-deazaguanine + NH4(+). It participates in purine metabolism; 7-cyano-7-deazaguanine biosynthesis. Catalyzes the complex heterocyclic radical-mediated conversion of 6-carboxy-5,6,7,8-tetrahydropterin (CPH4) to 7-carboxy-7-deazaguanine (CDG), a step common to the biosynthetic pathways of all 7-deazapurine-containing compounds. The polypeptide is 7-carboxy-7-deazaguanine synthase (Bacteroides thetaiotaomicron (strain ATCC 29148 / DSM 2079 / JCM 5827 / CCUG 10774 / NCTC 10582 / VPI-5482 / E50)).